Reading from the N-terminus, the 376-residue chain is 23S rRNA (uracil(747)-C(5))-methyltransferase RlmC (376 aa).

The [4Fe-4S] cluster site is built by cysteine 3, cysteine 11, cysteine 14, and cysteine 87. S-adenosyl-L-methionine contacts are provided by glutamine 212, phenylalanine 241, glutamate 262, and asparagine 307. The Nucleophile role is filled by cysteine 334.

It belongs to the class I-like SAM-binding methyltransferase superfamily. RNA M5U methyltransferase family. RlmC subfamily.

The enzyme catalyses uridine(747) in 23S rRNA + S-adenosyl-L-methionine = 5-methyluridine(747) in 23S rRNA + S-adenosyl-L-homocysteine + H(+). Functionally, catalyzes the formation of 5-methyl-uridine at position 747 (m5U747) in 23S rRNA. The protein is 23S rRNA (uracil(747)-C(5))-methyltransferase RlmC of Yersinia pestis bv. Antiqua (strain Antiqua).